The sequence spans 514 residues: Peptide chain release factor 3 (514 aa).

Residues 8–268 (KKRRTFAIIS…TFLEFAPEPH (261 aa)) enclose the tr-type G domain. GTP-binding positions include 17-24 (SHPDAGKT), 85-89 (DTPGH), and 139-142 (NKLD).

The protein belongs to the TRAFAC class translation factor GTPase superfamily. Classic translation factor GTPase family. PrfC subfamily.

Its subcellular location is the cytoplasm. Its function is as follows. Increases the formation of ribosomal termination complexes and stimulates activities of RF-1 and RF-2. It binds guanine nucleotides and has strong preference for UGA stop codons. It may interact directly with the ribosome. The stimulation of RF-1 and RF-2 is significantly reduced by GTP and GDP, but not by GMP. The sequence is that of Peptide chain release factor 3 from Streptococcus pyogenes serotype M49 (strain NZ131).